The following is a 393-amino-acid chain: NAD(P)H-quinone oxidoreductase subunit H, chloroplastic (393 aa).

It belongs to the complex I 49 kDa subunit family. As to quaternary structure, NDH is composed of at least 16 different subunits, 5 of which are encoded in the nucleus.

The protein resides in the plastid. Its subcellular location is the chloroplast thylakoid membrane. It carries out the reaction a plastoquinone + NADH + (n+1) H(+)(in) = a plastoquinol + NAD(+) + n H(+)(out). The catalysed reaction is a plastoquinone + NADPH + (n+1) H(+)(in) = a plastoquinol + NADP(+) + n H(+)(out). Its function is as follows. NDH shuttles electrons from NAD(P)H:plastoquinone, via FMN and iron-sulfur (Fe-S) centers, to quinones in the photosynthetic chain and possibly in a chloroplast respiratory chain. The immediate electron acceptor for the enzyme in this species is believed to be plastoquinone. Couples the redox reaction to proton translocation, and thus conserves the redox energy in a proton gradient. The sequence is that of NAD(P)H-quinone oxidoreductase subunit H, chloroplastic from Panax ginseng (Korean ginseng).